Consider the following 510-residue polypeptide: Ribonuclease Y (510 aa).

The chain crosses the membrane as a helical span at residues 1 to 21 (MLIYILSGLGVLVGALLGYVV). The KH domain occupies 200–260 (TVSTIMLPND…LRREIAKRTI (61 aa)). One can recognise an HD domain in the interval 326–419 (VLNHSIEVAL…VAAADALSAA (94 aa)).

Belongs to the RNase Y family.

The protein resides in the cell membrane. Its function is as follows. Endoribonuclease that initiates mRNA decay. This is Ribonuclease Y from Thermosipho melanesiensis (strain DSM 12029 / CIP 104789 / BI429).